A 147-amino-acid polypeptide reads, in one-letter code: Ribosome maturation factor RimP (147 aa).

Belongs to the RimP family.

It localises to the cytoplasm. Its function is as follows. Required for maturation of 30S ribosomal subunits. The chain is Ribosome maturation factor RimP from Sulfurihydrogenibium azorense (strain DSM 15241 / OCM 825 / Az-Fu1).